The sequence spans 136 residues: Large ribosomal subunit protein uL16 (136 aa).

This sequence belongs to the universal ribosomal protein uL16 family. Part of the 50S ribosomal subunit.

Functionally, binds 23S rRNA and is also seen to make contacts with the A and possibly P site tRNAs. In Pseudoalteromonas atlantica (strain T6c / ATCC BAA-1087), this protein is Large ribosomal subunit protein uL16.